The following is a 591-amino-acid chain: Protein kinase C zeta type (591 aa).

One can recognise a PB1 domain in the interval 15 to 98; that stretch reads RVRLKAHYSG…DGLILHVFPS (84 aa). The interval 79-145 is interaction with SQSTM1; that stretch reads AFRLAGQHRD…KRFNRRAYCG (67 aa). The Phorbol-ester/DAG-type zinc finger occupies 130–180; the sequence is GHLFQAKRFNRRAYCGQCSERIWGLARQGYRCINCKLLVHKRCHGLVPLTC. The region spanning 251 to 517 is the Protein kinase domain; sequence FDLIRVIGRG…FSDIKSHAFF (267 aa). ATP is bound by residues 257–265 and Lys280; that span reads IGRGSYAKV. The active-site Proton acceptor is Asp375. Thr409 is modified (phosphothreonine; by PDPK1 and PI3K). The region spanning 518–589 is the AGC-kinase C-terminal domain; it reads RSIDWDLLEK…INPLLLSTEE (72 aa). At Thr559 the chain carries Phosphothreonine. Ser590 is modified (phosphoserine).

This sequence belongs to the protein kinase superfamily. AGC Ser/Thr protein kinase family. PKC subfamily. In terms of assembly, interacts with PARD6A, PARD6B and PARD6G. Part of a complex with PARD3, PARD6A or PARD6B or PARD6G and CDC42 or RAC1. Interacts with ADAP1/CENTA1. Interacts directly with SQSTM1. Forms a ternary complex with SQSTM1 and KCNAB2. Forms another ternary complex with SQSTM1 and GABRR3. Forms a complex with SQSTM1 and MAP2K5. Interacts (via the protein kinase domain) with WWC1. Forms a tripartite complex with WWC1 and DDR1, but predominantly in the absence of collagen. Component of the Par polarity complex, composed of at least phosphorylated PRKCZ, PARD3 and TIAM1. Interacts with PDPK1 (via N-terminal region). Interacts with WDFY2 (via WD repeats 1-3). Interacts with VAMP2. Forms a complex with WDFY2 and VAMP2. Interacts with APPL1. Interacts with WWC1, WWC2 and WWC3. Post-translationally, CDH5 is required for its phosphorylation at Thr-409. Phosphorylated by protein kinase PDPK1; phosphorylation is inhibited by the apoptotic C-terminal cleavage product of PKN2. Phosphorylation at Thr-409 by PI3K activates the kinase.

The protein localises to the cytoplasm. The protein resides in the endosome. It is found in the cell junction. Its subcellular location is the membrane. The enzyme catalyses L-seryl-[protein] + ATP = O-phospho-L-seryl-[protein] + ADP + H(+). It carries out the reaction L-threonyl-[protein] + ATP = O-phospho-L-threonyl-[protein] + ADP + H(+). With respect to regulation, atypical PKCs (PRKCI and PRKCZ) exhibit an elevated basal enzymatic activity (that may be due to the interaction with SMG1 or SQSTM1) and are not regulated by diacylglycerol, phosphatidylserine, phorbol esters or calcium ions. Two specific sites, Thr-409 (activation loop of the kinase domain) and Thr-559 (turn motif), need to be phosphorylated for its full activation. Phosphatidylinositol 3,4,5-trisphosphate might be a physiological activator. Functionally, calcium- and diacylglycerol-independent serine/threonine-protein kinase that functions in phosphatidylinositol 3-kinase (PI3K) pathway and mitogen-activated protein (MAP) kinase cascade, and is involved in NF-kappa-B activation, mitogenic signaling, cell proliferation, cell polarity, inflammatory response and maintenance of long-term potentiation (LTP). Upon lipopolysaccharide (LPS) treatment in macrophages, or following mitogenic stimuli, functions downstream of PI3K to activate MAP2K1/MEK1-MAPK1/ERK2 signaling cascade independently of RAF1 activation. Required for insulin-dependent activation of AKT3, but may function as an adapter rather than a direct activator. Upon insulin treatment may act as a downstream effector of PI3K and contribute to the activation of translocation of the glucose transporter SLC2A4/GLUT4 and subsequent glucose transport in adipocytes. In EGF-induced cells, binds and activates MAP2K5/MEK5-MAPK7/ERK5 independently of its kinase activity and can activate JUN promoter through MEF2C. Through binding with SQSTM1/p62, functions in interleukin-1 signaling and activation of NF-kappa-B with the specific adapters RIPK1 and TRAF6. Participates in TNF-dependent transactivation of NF-kappa-B by phosphorylating and activating IKBKB kinase, which in turn leads to the degradation of NF-kappa-B inhibitors. In migrating astrocytes, forms a cytoplasmic complex with PARD6A and is recruited by CDC42 to function in the establishment of cell polarity along with the microtubule motor and dynein. In association with FEZ1, stimulates neuronal differentiation in PC12 cells. In the inflammatory response, is required for the T-helper 2 (Th2) differentiation process, including interleukin production, efficient activation of JAK1 and the subsequent phosphorylation and nuclear translocation of STAT6. May be involved in development of allergic airway inflammation (asthma), a process dependent on Th2 immune response. In the NF-kappa-B-mediated inflammatory response, can relieve SETD6-dependent repression of NF-kappa-B target genes by phosphorylating the RELA subunit at 'Ser-311'. Phosphorylates VAMP2 in vitro. Phosphorylates and activates LRRK1, which phosphorylates RAB proteins involved in intracellular trafficking. This chain is Protein kinase C zeta type (PRKCZ), found in Oryctolagus cuniculus (Rabbit).